The following is a 138-amino-acid chain: Basic phospholipase A2 Mtx-b (138 aa).

The signal sequence occupies residues 1 to 16; sequence MRALWIVAVLLVGVEG. 7 cysteine pairs are disulfide-bonded: Cys42–Cys131, Cys44–Cys60, Cys59–Cys111, Cys65–Cys138, Cys66–Cys104, Cys73–Cys97, and Cys91–Cys102. Residues Tyr43, Gly45, and Gly47 each contribute to the Ca(2+) site. The active site involves His63. Asp64 contributes to the Ca(2+) binding site. The active site involves Asp105.

Heterodimer of an acidic subunit and a basic chain. The acidic subunit is non-toxic, without enzymatic activity and comprises 3 peptides that are cross-linked by 7 disulfide bridges. The basic subunit is toxic, has phospholipase A2 activity and is composed of a single chain. Requires Ca(2+) as cofactor. As to expression, expressed by the venom gland.

The protein localises to the secreted. It carries out the reaction a 1,2-diacyl-sn-glycero-3-phosphocholine + H2O = a 1-acyl-sn-glycero-3-phosphocholine + a fatty acid + H(+). Functionally, snake venom phospholipase A2 (PLA2) that inhibits neuromuscular transmission by blocking acetylcholine release from the nerve termini. PLA2 catalyzes the calcium-dependent hydrolysis of the 2-acyl groups in 3-sn-phosphoglycerides. This is Basic phospholipase A2 Mtx-b from Crotalus scutulatus scutulatus (Mojave rattlesnake).